The primary structure comprises 724 residues: Putative methyltransferase NSUN7 (724 aa).

Catalysis depends on cysteine 444, which acts as the Nucleophile. 3 disordered regions span residues 542 to 574 (KTLK…LAVD), 595 to 629 (ISTS…TPLV), and 698 to 724 (TSST…RPWL). The segment covering 543–554 (TLKRDKKRKKSK) has biased composition (basic residues). The span at 562–572 (HHGDPLRDHLA) shows a compositional bias: basic and acidic residues. A compositionally biased stretch (polar residues) spans 595-618 (ISTSTKMSAPAKTVSQAGTSSQVR).

The protein belongs to the class I-like SAM-binding methyltransferase superfamily. RsmB/NOP family. In terms of tissue distribution, expressed in testis.

Functionally, may have S-adenosyl-L-methionine-dependent methyl-transferase activity. In Mus musculus (Mouse), this protein is Putative methyltransferase NSUN7 (Nsun7).